The following is a 680-amino-acid chain: Anosmin-1 (680 aa).

The N-terminal stretch at 1-24 (MVPGVPGAVLTLCLWLAASSGCLA) is a signal peptide. Disulfide bonds link Cys49-Cys83, Cys53-Cys77, Cys86-Cys105, Cys90-Cys101, and Cys116-Cys120. N-linked (GlcNAc...) asparagine glycosylation is present at Asn71. Residues 127–176 (LLVKQGDCPAPEKASGFAAACVESCEVDNECSGVKKCCSNGCGHTCQVPK) enclose the WAP domain. Fibronectin type-III domains follow at residues 186–287 (PRKE…SKDP), 292–400 (APAN…THAT), 425–523 (PTRP…TPPC), and 550–658 (KPEN…LPPS). Asn209, Asn300, Asn470, Asn553, and Asn564 each carry an N-linked (GlcNAc...) asparagine glycan. The interval 642-680 (EGPATIKTFRTPELPPSSAHRSHLKHRHPHHYKPSPERY) is disordered. The segment covering 661 to 674 (HRSHLKHRHPHHYK) has biased composition (basic residues).

As to quaternary structure, interacts with FGFR1; this interaction does not interfere with FGF2-binding to FGFR1. Binds heparin. Heparin may promote or interfere with ANOS1-FGFR1-FGF2 complex formation depending on the sequential order of its binding to the various constituents. For instance, heparin-ANOS1 interaction favors subsequent binding to pre-existing binary FGFR1-FGF2 complex, while heparin-FGF2 complex does not interact with ANOS1-FGFR1. In terms of processing, N-glycosylated. Post-translationally, may be proteolytically cleaved at the cell surface and released from the cell surface. Expressed in the cerebellum (at protein level).

Its subcellular location is the cell membrane. It localises to the secreted. Its function is as follows. Has a dual branch-promoting and guidance activity, which may play an important role in the patterning of mitral and tufted cell collaterals to the olfactory cortex. Chemoattractant for fetal olfactory epithelial cells. The polypeptide is Anosmin-1 (Homo sapiens (Human)).